Consider the following 318-residue polypeptide: Transcription factor zip-4 (318 aa).

The segment covering 1–13 (MYNYNYSRGNKSM) has biased composition (polar residues). 4 disordered regions span residues 1–20 (MYNY…PRFH), 147–205 (EKKP…TAAA), 238–257 (NNDA…LQKD), and 273–318 (ELQS…KSNY). Over residues 173-190 (DYQEEGETSLSDNDESVD) the composition is skewed to acidic residues. One can recognise a bZIP domain in the interval 228-291 (EPIYKLKRAR…ERDQQLIKQL (64 aa)). Positions 232-266 (KLKRARNNDAVRKSRNKAKELQLQKDEEYDEMKKR) are basic motif. Residues 242 to 280 (VRKSRNKAKELQLQKDEEYDEMKKRITQLEAELQSEREG) adopt a coiled-coil conformation. The leucine-zipper stretch occupies residues 267–274 (ITQLEAEL). Basic and acidic residues predominate over residues 275–298 (QSEREGRERDQQLIKQLIREKEST). Over residues 307 to 318 (RNALESFNKSNY) the composition is skewed to polar residues.

Belongs to the bZIP family. C/EBP subfamily.

The protein resides in the nucleus. Its function is as follows. Transcription factor that binds to the promoter and the enhancer regions of target genes. Involved in responding to mitochondrial damage. Has a protective role in response to infection by the Gram-negative bacterium P.aeruginosa. This is Transcription factor zip-4 from Caenorhabditis elegans.